Reading from the N-terminus, the 280-residue chain is 3-hydroxyacyl-thioester dehydratase X (280 aa).

Positions 149 to 170 (QRTSLSGEPKPPPQKKPKLPPP) are disordered. Positions 162–256 (QKKPKLPPPA…TAGLYVAEGD (95 aa)) constitute a MaoC-like domain.

This sequence belongs to the enoyl-CoA hydratase/isomerase family.

It catalyses the reaction a (3R)-3-hydroxyacyl-CoA = a (2E)-enoyl-CoA + H2O. It carries out the reaction (2E)-octenoyl-CoA + H2O = (3R)-hydroxyoctanoyl-CoA. The enzyme catalyses (3R)-3-hydroxydodecanoyl-CoA = (2E)-dodecenoyl-CoA + H2O. The catalysed reaction is (3R)-hydroxyhexadecanoyl-CoA = (2E)-hexadecenoyl-CoA + H2O. It catalyses the reaction (3R)-hydroxyeicosanoyl-CoA = (2E)-eicosenoyl-CoA + H2O. It carries out the reaction (3R)-3-hydroxybutanoyl-CoA = (2E)-butenoyl-CoA + H2O. Shows trans-enoyl-CoA hydratase/3-hydroxyacyl-CoA dehydratase activity. Displays a broad chain length specificity, with a predilection for the C8 to C12 substrates. The protein is 3-hydroxyacyl-thioester dehydratase X of Mycobacterium tuberculosis (strain ATCC 25618 / H37Rv).